The sequence spans 86 residues: Putative membrane protein insertion efficiency factor (86 aa).

Belongs to the UPF0161 family.

The protein resides in the cell inner membrane. Its function is as follows. Could be involved in insertion of integral membrane proteins into the membrane. This chain is Putative membrane protein insertion efficiency factor, found in Histophilus somni (strain 129Pt) (Haemophilus somnus).